The following is a 114-amino-acid chain: Propane 2-monooxygenase, effector component (114 aa).

The protein belongs to the TmoD/XamoD family. The propane 2-monooxygenase multicomponent enzyme system is composed of an electron transfer component and a monooxygenase component interacting with the effector protein MimD. The electron transfer component is composed of a reductase (MimB), and the monooxygenase component is formed by a large subunit (MimA) and a small subunit (MimC).

Functionally, effector component of the propane 2-monooxygenase multicomponent enzyme system which is involved in the degradation of propane via the O2-dependent hydroxylation of propane. The polypeptide is Propane 2-monooxygenase, effector component (Mycolicibacterium smegmatis (strain ATCC 700084 / mc(2)155) (Mycobacterium smegmatis)).